Consider the following 86-residue polypeptide: Small ribosomal subunit protein bS20 (86 aa).

Residues M1–S26 are disordered.

Belongs to the bacterial ribosomal protein bS20 family.

Binds directly to 16S ribosomal RNA. This Photobacterium profundum (strain SS9) protein is Small ribosomal subunit protein bS20.